A 450-amino-acid chain; its full sequence is Bifunctional protein GlmU (450 aa).

Residues 1–228 (MKTALVILAA…ESETLGINSR (228 aa)) are pyrophosphorylase. UDP-N-acetyl-alpha-D-glucosamine-binding positions include 8–11 (LAAG), Lys-22, Gln-75, and 80–81 (GT). Asp-105 contacts Mg(2+). Gly-140, Glu-154, Asn-169, and Asn-226 together coordinate UDP-N-acetyl-alpha-D-glucosamine. Asn-226 serves as a coordination point for Mg(2+). The segment at 229–249 (TELSAAEAAFQERARTNAFEN) is linker. Positions 250-450 (GVTLPAPGTV…AKKAKQQRGS (201 aa)) are N-acetyltransferase. Residues Arg-315 and Lys-333 each contribute to the UDP-N-acetyl-alpha-D-glucosamine site. The Proton acceptor role is filled by His-345. UDP-N-acetyl-alpha-D-glucosamine-binding residues include Tyr-348 and Asn-359. Residues Ala-362, 368–369 (NY), Ser-387, Ser-405, and Arg-422 contribute to the acetyl-CoA site.

It in the N-terminal section; belongs to the N-acetylglucosamine-1-phosphate uridyltransferase family. The protein in the C-terminal section; belongs to the transferase hexapeptide repeat family. As to quaternary structure, homotrimer. Requires Mg(2+) as cofactor.

It localises to the cytoplasm. The catalysed reaction is alpha-D-glucosamine 1-phosphate + acetyl-CoA = N-acetyl-alpha-D-glucosamine 1-phosphate + CoA + H(+). It catalyses the reaction N-acetyl-alpha-D-glucosamine 1-phosphate + UTP + H(+) = UDP-N-acetyl-alpha-D-glucosamine + diphosphate. Its pathway is nucleotide-sugar biosynthesis; UDP-N-acetyl-alpha-D-glucosamine biosynthesis; N-acetyl-alpha-D-glucosamine 1-phosphate from alpha-D-glucosamine 6-phosphate (route II): step 2/2. The protein operates within nucleotide-sugar biosynthesis; UDP-N-acetyl-alpha-D-glucosamine biosynthesis; UDP-N-acetyl-alpha-D-glucosamine from N-acetyl-alpha-D-glucosamine 1-phosphate: step 1/1. It participates in bacterial outer membrane biogenesis; LPS lipid A biosynthesis. Catalyzes the last two sequential reactions in the de novo biosynthetic pathway for UDP-N-acetylglucosamine (UDP-GlcNAc). The C-terminal domain catalyzes the transfer of acetyl group from acetyl coenzyme A to glucosamine-1-phosphate (GlcN-1-P) to produce N-acetylglucosamine-1-phosphate (GlcNAc-1-P), which is converted into UDP-GlcNAc by the transfer of uridine 5-monophosphate (from uridine 5-triphosphate), a reaction catalyzed by the N-terminal domain. The sequence is that of Bifunctional protein GlmU from Roseobacter denitrificans (strain ATCC 33942 / OCh 114) (Erythrobacter sp. (strain OCh 114)).